Here is a 286-residue protein sequence, read N- to C-terminus: Putative transcription factor kapC (286 aa).

Residues 1 to 10 (MQPALAPAPH) show a composition bias toward pro residues. Residues 1-120 (MQPALAPAPH…QNRAAQRAFR (120 aa)) are disordered. Residues 26–40 (HDQLLAAHQHLSHPQ) are compositionally biased toward low complexity. Over residues 41 to 54 (QPRPQAPATQPPHM) the composition is skewed to pro residues. Residues 55-67 (QPNTASPRDQNNI) show a composition bias toward polar residues. Positions 81-92 (PQTPPQPEPAPQ) are enriched in pro residues. In terms of domain architecture, bZIP spans 102–165 (PLSTSKRAAQ…EYIINLQTRL (64 aa)). Residues 103–126 (LSTSKRAAQNRAAQRAFRQRKESY) form a basic motif region. Low complexity predominate over residues 108 to 118 (RAAQNRAAQRA). The tract at residues 130–161 (LEEQVKHQEAITEEYKALHAENYQLREYIINL) is leucine-zipper. A disordered region spans residues 197–286 (RGNAASAGPA…QEPDGLPVVS (90 aa)). The segment covering 198-222 (GNAASAGPAPAGPGPQQSQPNQNQG) has biased composition (low complexity).

It belongs to the bZIP family.

Its subcellular location is the nucleus. Its function is as follows. Putative transcription factor. This chain is Putative transcription factor kapC (kapC), found in Aspergillus terreus (strain NIH 2624 / FGSC A1156).